The sequence spans 433 residues: GTPase Der (433 aa).

EngA-type G domains follow at residues 3–167 (KIVS…DKNI) and 175–349 (PRIA…FNLR). GTP-binding positions include 9–16 (GRPNVGKS), 56–60 (DTGGY), 119–122 (NKID), 181–188 (GRPNVGKS), 228–232 (DTAGI), and 293–296 (NKWD). Positions 350-433 (LRIKTSLLNK…IPIKILFRLK (84 aa)) constitute a KH-like domain.

This sequence belongs to the TRAFAC class TrmE-Era-EngA-EngB-Septin-like GTPase superfamily. EngA (Der) GTPase family. As to quaternary structure, associates with the 50S ribosomal subunit.

GTPase that plays an essential role in the late steps of ribosome biogenesis. The chain is GTPase Der from Karelsulcia muelleri (strain GWSS) (Sulcia muelleri).